The primary structure comprises 76 residues: DNA-directed RNA polymerase subunit epsilon (76 aa).

Belongs to the RNA polymerase subunit epsilon family. In terms of assembly, RNAP is composed of a core of 2 alpha, a beta and a beta' subunit. The core is associated with a delta subunit, and at least one of epsilon or omega. When a sigma factor is associated with the core the holoenzyme is formed, which can initiate transcription.

The catalysed reaction is RNA(n) + a ribonucleoside 5'-triphosphate = RNA(n+1) + diphosphate. Functionally, a non-essential component of RNA polymerase (RNAP). The polypeptide is DNA-directed RNA polymerase subunit epsilon (Streptococcus mutans serotype c (strain ATCC 700610 / UA159)).